We begin with the raw amino-acid sequence, 250 residues long: Tripartite motif-containing protein 73 (250 aa).

The RING-type zinc-finger motif lies at 16 to 57; it reads CPICLEVFKESLMLQCGHSYCKGCLVSLSYHLDTKVRCPMCW. The B box-type zinc finger occupies 84–125; that stretch reads PEPKVCVHHRNPLSLFCEKDQELICGLCGLLGSHQHHPVTPV. Zn(2+)-binding residues include Cys-89, His-92, Cys-111, and His-117. 2 coiled-coil regions span residues 125 to 169 and 204 to 235; these read VSTV…NESD and LVAS…FGNE.

This sequence belongs to the TRIM/RBCC family.

The chain is Tripartite motif-containing protein 73 (TRIM73) from Homo sapiens (Human).